The following is a 237-amino-acid chain: NADH-ubiquinone oxidoreductase assembly factor N7BML (237 aa).

Over residues 214–223 (VEKERDDSGK) the composition is skewed to basic and acidic residues. Residues 214 to 237 (VEKERDDSGKPAEWTPKAAVRRRG) are disordered.

This sequence belongs to the complex I NDUFA12 subunit family.

The protein resides in the mitochondrion. Its function is as follows. Acts as an assembly factor of mitochondrial complex I. This is NADH-ubiquinone oxidoreductase assembly factor N7BML from Yarrowia lipolytica (strain CLIB 122 / E 150) (Yeast).